The chain runs to 52 residues: Large ribosomal subunit protein bL32c (52 aa).

The protein belongs to the bacterial ribosomal protein bL32 family.

It is found in the plastid. Its subcellular location is the chloroplast. In Lobularia maritima (Sweet alyssum), this protein is Large ribosomal subunit protein bL32c.